The sequence spans 408 residues: Digeranylgeranylglycerophospholipid reductase 1 (408 aa).

10 residues coordinate FAD: Ala-15, Glu-34, Cys-45, Ala-46, Gly-48, Arg-99, Val-123, Asp-279, Gly-291, and Ile-292.

This sequence belongs to the geranylgeranyl reductase family. DGGGPL reductase subfamily. The cofactor is FAD.

It carries out the reaction a 2,3-bis-O-phytanyl-sn-glycerol 1-phospholipid + 8 oxidized 2[4Fe-4S]-[ferredoxin] = a 2,3-bis-O-(geranylgeranyl)-sn-glycerol 1-phospholipid + 8 reduced 2[4Fe-4S]-[ferredoxin] + 16 H(+). It catalyses the reaction 2,3-bis-O-(phytanyl)-sn-glycerol 1-phosphate + 8 oxidized 2[4Fe-4S]-[ferredoxin] = 2,3-bis-O-(geranylgeranyl)-sn-glycerol 1-phosphate + 8 reduced 2[4Fe-4S]-[ferredoxin] + 16 H(+). The enzyme catalyses a 2,3-bis-O-phytanyl-sn-glycerol 1-phospholipid + 8 A = a 2,3-bis-O-(geranylgeranyl)-sn-glycerol 1-phospholipid + 8 AH2. The catalysed reaction is CDP-2,3-bis-O-(geranylgeranyl)-sn-glycerol + 8 AH2 = CDP-2,3-bis-O-(phytanyl)-sn-glycerol + 8 A. It carries out the reaction archaetidylserine + 8 AH2 = 2,3-bis-O-phytanyl-sn-glycero-3-phospho-L-serine + 8 A. Its pathway is membrane lipid metabolism; glycerophospholipid metabolism. Is involved in the reduction of 2,3-digeranylgeranylglycerophospholipids (unsaturated archaeols) into 2,3-diphytanylglycerophospholipids (saturated archaeols) in the biosynthesis of archaeal membrane lipids. Catalyzes the formation of archaetidic acid (2,3-di-O-phytanyl-sn-glyceryl phosphate) from 2,3-di-O-geranylgeranylglyceryl phosphate (DGGGP) via the hydrogenation of each double bond of the isoprenoid chains. Is also probably able to reduce double bonds of geranyl groups in CDP-2,3-bis-O-(geranylgeranyl)-sn-glycerol and archaetidylserine, thus acting at various stages in the biosynthesis of archaeal membrane lipids. The polypeptide is Digeranylgeranylglycerophospholipid reductase 1 (Methanococcoides burtonii (strain DSM 6242 / NBRC 107633 / OCM 468 / ACE-M)).